The sequence spans 122 residues: Large ribosomal subunit protein uL14 (122 aa).

It belongs to the universal ribosomal protein uL14 family. In terms of assembly, part of the 50S ribosomal subunit. Forms a cluster with proteins L3 and L19. In the 70S ribosome, L14 and L19 interact and together make contacts with the 16S rRNA in bridges B5 and B8.

Its function is as follows. Binds to 23S rRNA. Forms part of two intersubunit bridges in the 70S ribosome. The sequence is that of Large ribosomal subunit protein uL14 from Micrococcus luteus (Micrococcus lysodeikticus).